Consider the following 134-residue polypeptide: Ribosome-binding factor A (134 aa).

The protein belongs to the RbfA family. Monomer. Binds 30S ribosomal subunits, but not 50S ribosomal subunits or 70S ribosomes.

It localises to the cytoplasm. Its function is as follows. One of several proteins that assist in the late maturation steps of the functional core of the 30S ribosomal subunit. Associates with free 30S ribosomal subunits (but not with 30S subunits that are part of 70S ribosomes or polysomes). Required for efficient processing of 16S rRNA. May interact with the 5'-terminal helix region of 16S rRNA. This is Ribosome-binding factor A from Bdellovibrio bacteriovorus (strain ATCC 15356 / DSM 50701 / NCIMB 9529 / HD100).